Consider the following 179-residue polypeptide: Methylated-DNA--protein-cysteine methyltransferase (179 aa).

The active-site Nucleophile; methyl group acceptor is Cys130.

This sequence belongs to the MGMT family.

Its subcellular location is the cytoplasm. The enzyme catalyses a 6-O-methyl-2'-deoxyguanosine in DNA + L-cysteinyl-[protein] = S-methyl-L-cysteinyl-[protein] + a 2'-deoxyguanosine in DNA. The catalysed reaction is a 4-O-methyl-thymidine in DNA + L-cysteinyl-[protein] = a thymidine in DNA + S-methyl-L-cysteinyl-[protein]. In terms of biological role, involved in the cellular defense against the biological effects of O6-methylguanine (O6-MeG) and O4-methylthymine (O4-MeT) in DNA. Repairs the methylated nucleobase in DNA by stoichiometrically transferring the methyl group to a cysteine residue in the enzyme. This is a suicide reaction: the enzyme is irreversibly inactivated. The polypeptide is Methylated-DNA--protein-cysteine methyltransferase (Haemophilus influenzae (strain ATCC 51907 / DSM 11121 / KW20 / Rd)).